Reading from the N-terminus, the 212-residue chain is Ropporin-1 (212 aa).

The RIIa domain occupies 12–49 (PELPKMLKEFAKAAIRAQPQDLIQWGADYFEALSRGET). Phosphoserine is present on S56. The interval 209-212 (VWLE) is interaction with RHPN1.

The protein belongs to the ropporin family. In terms of assembly, homodimer. Interacts with AKAP3. May interact with SPA17. Interacts with RHPN1. Interacts with FSCB; the interaction increases upon spermatozoa capacitation conditions. Interacts with CFAP61. Post-translationally, sumoylated, sumoylation decreases upon spermatozoa capacitation conditions.

It is found in the cell projection. Its subcellular location is the cilium. It localises to the flagellum. Important for male fertility. With ROPN1L, involved in fibrous sheath integrity and sperm motility, plays a role in PKA-dependent signaling processes required for spermatozoa capacitation. The polypeptide is Ropporin-1 (ROPN1) (Macaca fascicularis (Crab-eating macaque)).